The sequence spans 236 residues: Carbonyl reductase family member 4 (236 aa).

NADP(+)-binding positions include 11–14, 34–35, D55, and 82–84; these read SRGI, RD, and SAG. A substrate-binding site is contributed by S134. NADP(+) contacts are provided by residues Y147, K151, and 180–182; that span reads IHT. The active-site Proton acceptor is Y147.

This sequence belongs to the short-chain dehydrogenases/reductases (SDR) family. Homotetramer (in vitro). Heterotetramer with HSD17B8; contains two molecules each of HSD17B8 and CBR4.

The protein localises to the mitochondrion matrix. It participates in lipid metabolism; fatty acid biosynthesis. In terms of biological role, the heterotetramer with HSD17B8 has NADH-dependent 3-ketoacyl-acyl carrier protein reductase activity, and thereby plays a role in mitochondrial fatty acid biosynthesis. Within the heterotetramer, HSD17B8 binds NADH; CBR4 binds NADPD. The homotetramer has NADPH-dependent quinone reductase activity. Both homotetramer and the heterotetramer have broad in vitro substrate specificity and can reduce 9,10-phenanthrenequinone, 1,4-benzoquinone and various other o-quinones and p-quinones. This Xenopus tropicalis (Western clawed frog) protein is Carbonyl reductase family member 4 (cbr4).